The primary structure comprises 409 residues: tRNA (guanine-N(7)-)-methyltransferase non-catalytic subunit wuho (409 aa).

The interval 48–72 (DADSDSDEESTQQPQKPPTNGNGTA) is disordered. A compositionally biased stretch (polar residues) spans 58–72 (TQQPQKPPTNGNGTA). 4 WD repeats span residues 72–111 (ADNV…DETN), 122–161 (MVSR…CKKP), 167–206 (GHMS…SIET), and 210–252 (GHGE…EVAR).

The protein belongs to the WD repeat TRM82 family. Forms a heterodimer with the catalytic subunit.

It is found in the nucleus. Its pathway is tRNA modification; N(7)-methylguanine-tRNA biosynthesis. Its function is as follows. Required for the formation of N(7)-methylguanine at position 46 (m7G46) in tRNA. In the complex, it is required to stabilize and induce conformational changes of the catalytic subunit. In Aedes aegypti (Yellowfever mosquito), this protein is tRNA (guanine-N(7)-)-methyltransferase non-catalytic subunit wuho.